Here is an 826-residue protein sequence, read N- to C-terminus: G-protein coupled receptor-associated sorting protein 2 (826 aa).

4 disordered regions span residues 1–126 (MTGA…AQAW), 204–286 (WCYP…NPFC), 336–371 (EGNRFRRRDKEEPNKTLKNENEKDVKNDETVEQESR), and 506–534 (IPEGASGNSEEKAKNAELGAEGEEQDSVA). Residues 13-31 (KPDKKPQEEVAGGAERESE) are compositionally biased toward basic and acidic residues. A compositionally biased stretch (polar residues) spans 59–73 (SSRARPKTETQSVSG). Over residues 231 to 247 (TREETSIRSWPREEVNT) the composition is skewed to basic and acidic residues. A compositionally biased stretch (basic residues) spans 248–264 (RSRHRAKHQTNARSKPR). 2 positions are modified to phosphoserine: S275 and S277.

The protein belongs to the GPRASP family. Interacts with cytoplasmic tails of a variety of G-protein coupled receptors such as muscarinic acetylcholine receptor M1/CHRM1 and calcitonin receptor/CALCR. As to expression, strongly expressed in the brain and the cochlea. Also in lung and muscle tissues. Localized in multiple structures of the cochlea, detected in the spiral ganglion, stria vascularis, spiral ligament, inner and outer hair cells.

Its function is as follows. May play a role in regulation of a variety of G-protein coupled receptors. This is G-protein coupled receptor-associated sorting protein 2 (Gprasp2) from Mus musculus (Mouse).